Here is a 426-residue protein sequence, read N- to C-terminus: Glutamyl-tRNA reductase (426 aa).

Residues 49 to 52 (TCNR), Ser109, 114 to 116 (EGQ), and Gln120 contribute to the substrate site. The active-site Nucleophile is the Cys50. 189–194 (GAGETG) contacts NADP(+).

It belongs to the glutamyl-tRNA reductase family. Homodimer.

The catalysed reaction is (S)-4-amino-5-oxopentanoate + tRNA(Glu) + NADP(+) = L-glutamyl-tRNA(Glu) + NADPH + H(+). It participates in porphyrin-containing compound metabolism; protoporphyrin-IX biosynthesis; 5-aminolevulinate from L-glutamyl-tRNA(Glu): step 1/2. It functions in the pathway porphyrin-containing compound metabolism; chlorophyll biosynthesis. Its function is as follows. Catalyzes the NADPH-dependent reduction of glutamyl-tRNA(Glu) to glutamate 1-semialdehyde (GSA). In Prosthecochloris aestuarii (strain DSM 271 / SK 413), this protein is Glutamyl-tRNA reductase.